The primary structure comprises 135 residues: Large ribosomal subunit protein eL32 (135 aa).

Belongs to the eukaryotic ribosomal protein eL32 family.

This Methanococcus maripaludis (strain C7 / ATCC BAA-1331) protein is Large ribosomal subunit protein eL32.